Reading from the N-terminus, the 662-residue chain is UPF0313 protein CPF_1407 (662 aa).

Residues 296-567 (AIEEVKFSIV…AMQRALLQFK (272 aa)) enclose the Radical SAM core domain. Residues C310, C314, and C317 each contribute to the [4Fe-4S] cluster site. A disordered region spans residues 596-662 (IRDKNSFGKG…QRSSKGKKRR (67 aa)). Over residues 618–632 (SRNENSGRRESEDKK) the composition is skewed to basic and acidic residues. The span at 633–644 (RSSHSKKQRGNK) shows a compositional bias: basic residues.

This sequence belongs to the UPF0313 family. [4Fe-4S] cluster is required as a cofactor.

This chain is UPF0313 protein CPF_1407, found in Clostridium perfringens (strain ATCC 13124 / DSM 756 / JCM 1290 / NCIMB 6125 / NCTC 8237 / Type A).